A 234-amino-acid polypeptide reads, in one-letter code: Probable chemoreceptor glutamine deamidase CheD 1 (234 aa).

Residues 183–234 are disordered; that stretch reads AREAAGPRGERAARARPRVELFGTPAPKAQATPRIELFGTRATQPATRKQEA. The segment covering 190-201 has biased composition (basic and acidic residues); the sequence is RGERAARARPRV. The segment covering 223-234 has biased composition (polar residues); that stretch reads RATQPATRKQEA.

This sequence belongs to the CheD family.

The catalysed reaction is L-glutaminyl-[protein] + H2O = L-glutamyl-[protein] + NH4(+). Probably deamidates glutamine residues to glutamate on methyl-accepting chemotaxis receptors (MCPs), playing an important role in chemotaxis. This chain is Probable chemoreceptor glutamine deamidase CheD 1, found in Burkholderia thailandensis (strain ATCC 700388 / DSM 13276 / CCUG 48851 / CIP 106301 / E264).